The chain runs to 178 residues: uncharacterized protein (178 aa).

Positions 1–19 (MKKLLIVTMLFTLALSAQA) are cleaved as a signal peptide.

It belongs to the opacity porin family.

This is an uncharacterized protein from Haemophilus influenzae (strain ATCC 51907 / DSM 11121 / KW20 / Rd).